The primary structure comprises 239 residues: Probable transcriptional regulatory protein BCQ_0605 (239 aa).

This sequence belongs to the TACO1 family. YeeN subfamily.

The protein localises to the cytoplasm. This Bacillus cereus (strain Q1) protein is Probable transcriptional regulatory protein BCQ_0605.